A 258-amino-acid chain; its full sequence is Ferredoxin--NADP reductase (258 aa).

Residues 2-102 form the FAD-binding FR-type domain; it reads SNLYTERVLS…RKPTGTLVHD (101 aa). Residues Arg51, Ala52, Tyr53, Ser54, Phe67, Ile69, Leu76, Thr77, and Thr117 each coordinate FAD. 9 residues coordinate NADP(+): Val144, Arg145, Thr181, Arg182, Arg190, Ser223, Glu227, Phe255, and Glu257. 3 residues coordinate FAD: Phe255, Glu257, and Lys258.

The protein belongs to the ferredoxin--NADP reductase type 1 family. In terms of assembly, monomer. FAD is required as a cofactor.

The enzyme catalyses 2 reduced [2Fe-2S]-[ferredoxin] + NADP(+) + H(+) = 2 oxidized [2Fe-2S]-[ferredoxin] + NADPH. Its function is as follows. Transports electrons between ferredoxin and NADPH. Provides electrons to heme oxygenase (pigA) allowing anaerobic heme degradation. Provides electrons necessary to reduce and mobilize Fe(3+) in a heterooligomeric bacterioferritin (BFR) complex to Fe(2+). Reduction of Fe(3+) in a pure FtnA BFR does not require Bfd. Reduction of Fe(3+) in a pure BfrB BFR does require Bfd. This is Ferredoxin--NADP reductase from Pseudomonas aeruginosa (strain ATCC 15692 / DSM 22644 / CIP 104116 / JCM 14847 / LMG 12228 / 1C / PRS 101 / PAO1).